We begin with the raw amino-acid sequence, 104 residues long: Urease subunit beta (104 aa).

The protein belongs to the urease beta subunit family. As to quaternary structure, heterotrimer of UreA (gamma), UreB (beta) and UreC (alpha) subunits. Three heterotrimers associate to form the active enzyme.

The protein resides in the cytoplasm. The catalysed reaction is urea + 2 H2O + H(+) = hydrogencarbonate + 2 NH4(+). The protein operates within nitrogen metabolism; urea degradation; CO(2) and NH(3) from urea (urease route): step 1/1. This Mycobacterium bovis (strain BCG / Pasteur 1173P2) protein is Urease subunit beta.